A 345-amino-acid polypeptide reads, in one-letter code: Phosphate acyltransferase (345 aa).

Belongs to the PlsX family. Homodimer. Probably interacts with PlsY.

Its subcellular location is the cytoplasm. The enzyme catalyses a fatty acyl-[ACP] + phosphate = an acyl phosphate + holo-[ACP]. It functions in the pathway lipid metabolism; phospholipid metabolism. In terms of biological role, catalyzes the reversible formation of acyl-phosphate (acyl-PO(4)) from acyl-[acyl-carrier-protein] (acyl-ACP). This enzyme utilizes acyl-ACP as fatty acyl donor, but not acyl-CoA. The protein is Phosphate acyltransferase of Nitratidesulfovibrio vulgaris (strain ATCC 29579 / DSM 644 / CCUG 34227 / NCIMB 8303 / VKM B-1760 / Hildenborough) (Desulfovibrio vulgaris).